A 375-amino-acid polypeptide reads, in one-letter code: Queuine tRNA-ribosyltransferase (375 aa).

Catalysis depends on Asp-90, which acts as the Proton acceptor. Residues 90–94, Asp-144, Gln-190, and Gly-217 each bind substrate; that span reads DSGGF. The segment at 248-254 is RNA binding; that stretch reads GIGTPHY. Asp-267 functions as the Nucleophile in the catalytic mechanism. The interval 272–276 is RNA binding; important for wobble base 34 recognition; the sequence is ARITR. The Zn(2+) site is built by Cys-305, Cys-307, Cys-310, and His-336.

It belongs to the queuine tRNA-ribosyltransferase family. Homodimer. Within each dimer, one monomer is responsible for RNA recognition and catalysis, while the other monomer binds to the replacement base PreQ1. Requires Zn(2+) as cofactor.

It carries out the reaction 7-aminomethyl-7-carbaguanine + guanosine(34) in tRNA = 7-aminomethyl-7-carbaguanosine(34) in tRNA + guanine. Its pathway is tRNA modification; tRNA-queuosine biosynthesis. In terms of biological role, catalyzes the base-exchange of a guanine (G) residue with the queuine precursor 7-aminomethyl-7-deazaguanine (PreQ1) at position 34 (anticodon wobble position) in tRNAs with GU(N) anticodons (tRNA-Asp, -Asn, -His and -Tyr). Catalysis occurs through a double-displacement mechanism. The nucleophile active site attacks the C1' of nucleotide 34 to detach the guanine base from the RNA, forming a covalent enzyme-RNA intermediate. The proton acceptor active site deprotonates the incoming PreQ1, allowing a nucleophilic attack on the C1' of the ribose to form the product. After dissociation, two additional enzymatic reactions on the tRNA convert PreQ1 to queuine (Q), resulting in the hypermodified nucleoside queuosine (7-(((4,5-cis-dihydroxy-2-cyclopenten-1-yl)amino)methyl)-7-deazaguanosine). The chain is Queuine tRNA-ribosyltransferase from Borreliella burgdorferi (strain ZS7) (Borrelia burgdorferi).